The following is a 1340-amino-acid chain: Serine/threonine-protein phosphatase 7 long form homolog (1340 aa).

Residues Asp-660 and His-662 each contribute to the Mn(2+) site. The active-site Proton donor is His-722. Residue His-773 participates in Mn(2+) binding. Disordered regions lie at residues 788-814 (QERN…DRSE), 1012-1093 (KSMD…SRTR), 1196-1218 (TDGA…SEDI), and 1266-1340 (FTNL…DMDS). Over residues 790–799 (RNRKRKRTQK) the composition is skewed to basic residues. Acidic residues predominate over residues 1018 to 1027 (EQMEVDEKDD). The span at 1049–1080 (GDRDMVDFSDKTENGSKEADHSETAEISKDLS) shows a compositional bias: basic and acidic residues. Residues 1203-1213 (EPSTSKLNYSE) are compositionally biased toward polar residues. Basic and acidic residues-rich tracts occupy residues 1266-1289 (FTNL…ERVI) and 1318-1328 (DSVDSKNKGSL).

The protein belongs to the PPP phosphatase family. PP-7 subfamily. Mn(2+) serves as cofactor. In terms of tissue distribution, expressed in root tips, the shoot apical meristem (SAM), leaf vasculature, hydathodes and mature flowers.

Its subcellular location is the nucleus. The enzyme catalyses O-phospho-L-seryl-[protein] + H2O = L-seryl-[protein] + phosphate. It catalyses the reaction O-phospho-L-threonyl-[protein] + H2O = L-threonyl-[protein] + phosphate. In terms of biological role, maybe required to maintain cell division activity in meristematic cells. The chain is Serine/threonine-protein phosphatase 7 long form homolog from Arabidopsis thaliana (Mouse-ear cress).